The primary structure comprises 4644 residues: Cytoplasmic dynein 1 heavy chain 1 (4644 aa).

Serine 2 carries the post-translational modification N-acetylserine. Positions 2 to 1865 (SETGGGEDGS…SIQMANAKFN (1864 aa)) are stem. Coiled coils occupy residues 48 to 69 (AALEAALEEKSALEQMRKFLSD), 179 to 200 (SVEKKIAELEMGLLHLQQNIEI), 453 to 476 (AHRKLQARLDQMRKFRRQHEQLRA), and 541 to 564 (TEAWEAAMKRYDERIDRVETRITA). At serine 68 the chain carries Phosphoserine. The interval 446–701 (MVWRINPAHR…NTQEIFDDWA (256 aa)) is interaction with DYNC1I2. The segment at 649–800 (AKQIDRQLTA…EKVEERNTIS (152 aa)) is interaction with DYNC1LI2. Lysine 1123 carries the post-translational modification N6-acetyllysine. Residues 1169-1201 (TYVQSLKRKIKQFEKQVELYRNGQRLLEKQRFQ) are a coiled coil. Serine 1228 is modified (phosphoserine). Coiled coils occupy residues 1229–1250 (AIQQQVANLQMKIVQEDRAVES) and 1355–1371 (RKLRQNLDGLLNQLKNF). AAA regions lie at residues 1866 to 2097 (YGFE…VLVS), 2178 to 2450 (EELK…LTRL), 2554 to 2803 (EVET…WVRG), and 2897 to 3166 (VFYE…GGRT). Residues 1904–1911 (GPAGTGKT) and 2222–2229 (GPSGSGKS) each bind ATP. Residues 2389 to 2409 (EDEAQRRRKGKEDEGEEAASP) form a disordered region. Residues 2593 to 2600 (GPPGSGKT) and 2935 to 2942 (GVSGAGKT) contribute to the ATP site. Coiled coils occupy residues 3187-3273 (EKRS…ADKQ), 3394-3498 (AIAQ…KNQM), and 3735-3798 (EFQL…VSQQ). The tract at residues 3187–3498 (EKRSELEEQQ…KTSETFKNQM (312 aa)) is stalk. At lysine 3478 the chain carries N6-acetyllysine. AAA regions lie at residues 3551-3780 (LSNA…EVTR) and 4003-4219 (AHMF…TVDT). At serine 4160 the chain carries Phosphoserine. The residue at position 4281 (lysine 4281) is an N6-acetyllysine. Threonine 4364 is subject to Phosphothreonine.

This sequence belongs to the dynein heavy chain family. Homodimer. The cytoplasmic dynein 1 complex consists of two catalytic heavy chains (HCs) and a number of non-catalytic subunits presented by intermediate chains (ICs), light intermediate chains (LICs) and light chains (LCs); the composition seems to vary in respect to the IC, LIC and LC composition. The heavy chain homodimer serves as a scaffold for the probable homodimeric assembly of the respective non-catalytic subunits. The ICs and LICs bind directly to the HC dimer and dynein LCs assemble on the IC dimer. Interacts with DYNC1LI1; DYNC1LI1 and DYNC1LI2 bind mutually exclusive to DYNC1H1. Interacts with DYNC1LI2; DYNC1LI1 and DYNC1LI2 bind mutually exclusive to DYNC1H1. Interacts with DYNC1I2. Interacts with BICD2. Interacts with DNALI1.

The protein resides in the cytoplasm. Its subcellular location is the cytoskeleton. Cytoplasmic dynein 1 acts as a motor for the intracellular retrograde motility of vesicles and organelles along microtubules. Dynein has ATPase activity; the force-producing power stroke is thought to occur on release of ADP. Plays a role in mitotic spindle assembly and metaphase plate congression. This chain is Cytoplasmic dynein 1 heavy chain 1 (Dync1h1), found in Rattus norvegicus (Rat).